Here is a 75-residue protein sequence, read N- to C-terminus: UPF0346 protein LSL_0716 (75 aa).

This sequence belongs to the UPF0346 family.

The polypeptide is UPF0346 protein LSL_0716 (Ligilactobacillus salivarius (strain UCC118) (Lactobacillus salivarius)).